The sequence spans 1140 residues: Centrosomal protein of 135 kDa (1140 aa).

The tract at residues 11 to 64 is homodimerization; it reads NIRKRLDQLGYRQTLTVECLPLVEKLFSDLVHTTESLRQSKLSAVKAEKESANF. Coiled-coil stretches lie at residues 75–151 and 199–416; these read NARL…KNLH and LQVA…FAVT. Residues serine 383 and serine 439 each carry the phosphoserine modification. 3 coiled-coil regions span residues 447 to 644, 668 to 1036, and 1079 to 1113; these read LKGI…LENK, SLRI…LESL, and NTML…AIQE. Residue serine 688 is modified to Phosphoserine. Residues 1114–1140 are disordered; it reads MRRHGLATPPLSSTLRSPSHSPEHRNV. Position 1121 is a phosphothreonine (threonine 1121). The segment covering 1121–1133 has biased composition (low complexity); sequence TPPLSSTLRSPSH. At serine 1130 the chain carries Phosphoserine.

It belongs to the CEP135/TSGA10 family. As to quaternary structure, homodimer. Interacts with DCTN2. Interacts with CEP250.

The protein resides in the cytoplasm. The protein localises to the cytoskeleton. It is found in the microtubule organizing center. Its subcellular location is the centrosome. It localises to the centriole. In terms of biological role, centrosomal microtubule-binding protein involved in centriole biogenesis. Acts as a scaffolding protein during early centriole biogenesis. Required for the targeting of centriole satellite proteins to centrosomes such as of PCM1, SSX2IP and CEP290 and recruitment of WRAP73 to centrioles. Also required for centriole-centriole cohesion during interphase by acting as a platform protein for CEP250 at the centriole. Required for the recruitment of CEP295 to the proximal end of new-born centrioles at the centriolar microtubule wall during early S phase in a PLK4-dependent manner. This chain is Centrosomal protein of 135 kDa, found in Homo sapiens (Human).